The following is a 440-amino-acid chain: Chromosome partition protein MukF (440 aa).

The tract at residues Leu208 to Ile236 is leucine-zipper.

This sequence belongs to the MukF family. In terms of assembly, interacts, and probably forms a ternary complex, with MukE and MukB via its C-terminal region. The complex formation is stimulated by calcium or magnesium. It is required for an interaction between MukE and MukB.

It localises to the cytoplasm. The protein resides in the nucleoid. Its function is as follows. Involved in chromosome condensation, segregation and cell cycle progression. May participate in facilitating chromosome segregation by condensation DNA from both sides of a centrally located replisome during cell division. Not required for mini-F plasmid partitioning. Probably acts via its interaction with MukB and MukE. Overexpression results in anucleate cells. It has a calcium binding activity. In Escherichia coli O127:H6 (strain E2348/69 / EPEC), this protein is Chromosome partition protein MukF.